The sequence spans 785 residues: E3 UFM1-protein ligase 1 homolog (785 aa).

A compositionally biased stretch (basic and acidic residues) spans methionine 396 to aspartate 416. A disordered region spans residues methionine 396–lysine 473. Residues lysine 439–arginine 449 show a composition bias toward basic residues.

Belongs to the UFL1 family.

E3 UFM1-protein ligase that mediates ufmylation of target proteins. This is E3 UFM1-protein ligase 1 homolog from Culex quinquefasciatus (Southern house mosquito).